Consider the following 227-residue polypeptide: uncharacterized protein (227 aa).

Transmembrane regions (helical) follow at residues 113–133 (IMLI…FIVF) and 141–161 (FGIC…NGLI).

The protein localises to the membrane. This is an uncharacterized protein from Dictyostelium discoideum (Social amoeba).